Reading from the N-terminus, the 150-residue chain is Large ribosomal subunit protein bL9 (150 aa).

It belongs to the bacterial ribosomal protein bL9 family.

Its function is as follows. Binds to the 23S rRNA. The polypeptide is Large ribosomal subunit protein bL9 (Streptococcus pyogenes serotype M6 (strain ATCC BAA-946 / MGAS10394)).